The following is a 1300-amino-acid chain: MGYKLKRWPLVAFTFTGIGLGVVLAACSALNTSNLFPRQNRSKQLIGFTENNIIKPEAVLKAALAEDNGTETILRVNFGEALKSWYQNNKDRNIATRLTIFSENVEDEHDNLLDQKQQAEPINWPIELQKEYDQWGGSESSWKALKLYDRLIADFQSLIFSNIVANVQLTDGSDQFKPTTKDNLDSTSNKIKFVNSKPNDPNGEFFANLQAYLFAQWVVEENPLPLTQAFFAYQAPKDGLDSLYDQAAIGSALQLGYAFPAFREPNNGQSQGKTTFDPTPNSAQNFGDFIKAVFPEQKNGQTQQSNTSSRTGLFDWQTKWNTNGAANKLLVTKSNLRGAFKGVGLATAIIDQYEYLVGGSKTSSLPEVKVDSNKSNQNPLDSFFMEGKDAVAIRSIVSRAKIAMTDQTPGFKVNPAFVKVKQSQQNDTFYQNQRKLSGGQSGDNNSQGKHHYLQDAVRLTSSQAMAAASTGADSSSGTNVGGSSGGNSVLIPLPRSAALTHTQQQVQQTTSTLQTPVYARGDDGTYALAIDGGDYFLANNKRDFTKQADILLYRYLQAKSNNFKENGVEFSLNLLESGSLFQTWAQTGLTAKLYGALVAMMGSGQGTQVKGSVQGSSRAASVSVQTTQQNRQQSTDTQESEVVKLAKSLLKSSADLAKPFTDNPTFKKALTDIQSEYKDYLAAAGKLSEFKKDLGEVSGLQQAIIDRADKYIQLEKQAQKSAIGLGQPLPYQRASDGSYPALEKFFIPEDSAADGKVKASESGSAALVTLKTTDSQKSTNTVKQPDIKPTRENNDKKLKQLTSDVETKASSLITKWGATPQIGSQFSEIVSLKSKDNKPQTNMILALLSDVGIKWTKILNSFKEWFFTNTNDFKNNYDSEKKELKGNEYKDFNDLVKQTLYLRSWQRLTSKEKFGYYKELGSVKAQAAQSGMVSLSSSAAVANAVASSGMQKSGDQTLLELGKKAFESELEASSSDGQYKYLRFLSTLMWLVKDGAKNYKRLLQQAITVGTRAFVSWTVSYDDTATASAAAAKAQVAVLKTAQATNTQSDNPFNKFVQNPDYVQGSETNWFNDKSTPIKPDSLLESESTYNFTAEPFDDKTKSQKRSTGGTTNEKHFFGFNGLTINSPQSVSTASAGLTEQIFNNFGQLVTSSDKSGALSQYKDKATLKRLIQNTNSDAELNAFGEVLHRAVNVDTSNLGRFNSSGEPLISFDNKKKFLVDVVDKLDDVYFNKFEGYVGQTKVKMSDSSSSSQGTKTIRKPKPHHSPRTRVSRLWAMSFRLPTRTLTKFLLVEKLIRTVL.

Positions 1–26 (MGYKLKRWPLVAFTFTGIGLGVVLAA) are cleaved as a signal peptide. A lipid anchor (N-palmitoyl cysteine) is attached at Cys27. Cys27 carries S-diacylglycerol cysteine lipidation. The segment covering 464–478 (AMAAASTGADSSSGT) has biased composition (low complexity). Disordered stretches follow at residues 464-487 (AMAAASTGADSSSGTNVGGSSGGN), 620-639 (ASVSVQTTQQNRQQSTDTQE), 774-797 (DSQKSTNTVKQPDIKPTRENNDKK), and 1244-1269 (KMSDSSSSSQGTKTIRKPKPHHSPRT). 2 stretches are compositionally biased toward polar residues: residues 620–637 (ASVSVQTTQQNRQQSTDT) and 774–783 (DSQKSTNTVK). Basic and acidic residues predominate over residues 785 to 797 (PDIKPTRENNDKK). Over residues 1257-1269 (TIRKPKPHHSPRT) the composition is skewed to basic residues.

It belongs to the MG307/MG309/MG338 family.

Its subcellular location is the cell membrane. This is an uncharacterized protein from Mycoplasma pneumoniae (strain ATCC 29342 / M129 / Subtype 1) (Mycoplasmoides pneumoniae).